We begin with the raw amino-acid sequence, 402 residues long: Formate-dependent phosphoribosylglycinamide formyltransferase (402 aa).

N(1)-(5-phospho-beta-D-ribosyl)glycinamide is bound by residues 23–24 (EL) and glutamate 83. ATP-binding positions include arginine 116, lysine 157, 162-167 (SSGKGQ), 197-200 (ESQI), and glutamate 205. An ATP-grasp domain is found at 121 to 316 (RLAAEELGLP…EFELHARAIL (196 aa)). Glutamate 275 and glutamate 287 together coordinate Mg(2+). N(1)-(5-phospho-beta-D-ribosyl)glycinamide is bound by residues aspartate 294, lysine 363, and 370-371 (RR).

Belongs to the PurK/PurT family. In terms of assembly, homodimer.

The enzyme catalyses N(1)-(5-phospho-beta-D-ribosyl)glycinamide + formate + ATP = N(2)-formyl-N(1)-(5-phospho-beta-D-ribosyl)glycinamide + ADP + phosphate + H(+). The protein operates within purine metabolism; IMP biosynthesis via de novo pathway; N(2)-formyl-N(1)-(5-phospho-D-ribosyl)glycinamide from N(1)-(5-phospho-D-ribosyl)glycinamide (formate route): step 1/1. Involved in the de novo purine biosynthesis. Catalyzes the transfer of formate to 5-phospho-ribosyl-glycinamide (GAR), producing 5-phospho-ribosyl-N-formylglycinamide (FGAR). Formate is provided by PurU via hydrolysis of 10-formyl-tetrahydrofolate. In Acinetobacter baumannii (strain ATCC 17978 / DSM 105126 / CIP 53.77 / LMG 1025 / NCDC KC755 / 5377), this protein is Formate-dependent phosphoribosylglycinamide formyltransferase.